The chain runs to 382 residues: Alkane 1-monooxygenase 2 (382 aa).

Helical transmembrane passes span G17–V37, W45–G65, V88–F108, and G114–I134. H138, H142, H168, H172, and H173 together coordinate Fe cation. A helical membrane pass occupies residues A236–G256. 3 residues coordinate Fe cation: H312, H315, and H316.

Belongs to the fatty acid desaturase type 1 family. AlkB subfamily. It depends on Fe(3+) as a cofactor.

It is found in the cell inner membrane. It catalyses the reaction octane + 2 reduced [rubredoxin] + O2 + 2 H(+) = 2 oxidized [rubredoxin] + octan-1-ol + H2O. Its pathway is hydrocarbon metabolism; alkane degradation. Its function is as follows. Catalyzes the hydroxylation of n-alkanes in the presence of a NADH-rubredoxin reductase and rubredoxin. It preferably hydroxylases C8-C16 hydrocarbons. The sequence is that of Alkane 1-monooxygenase 2 (alkB2) from Alcanivorax borkumensis (strain ATCC 700651 / DSM 11573 / NCIMB 13689 / SK2).